The following is a 245-amino-acid chain: Probable phosphatase YPTB2019 (245 aa).

Zn(2+) is bound by residues His7, His9, His15, His40, Glu73, His101, His131, Asp192, and His194.

Belongs to the PHP family. Homotrimer. It depends on Zn(2+) as a cofactor.

The protein is Probable phosphatase YPTB2019 of Yersinia pseudotuberculosis serotype I (strain IP32953).